Here is a 130-residue protein sequence, read N- to C-terminus: Small ribosomal subunit protein uS8 (130 aa).

It belongs to the universal ribosomal protein uS8 family. In terms of assembly, part of the 30S ribosomal subunit. Contacts proteins S5 and S12.

In terms of biological role, one of the primary rRNA binding proteins, it binds directly to 16S rRNA central domain where it helps coordinate assembly of the platform of the 30S subunit. In Cereibacter sphaeroides (strain KD131 / KCTC 12085) (Rhodobacter sphaeroides), this protein is Small ribosomal subunit protein uS8.